The chain runs to 639 residues: Carbon monoxide dehydrogenase (639 aa).

Residues Cys41, Cys49, Cys50, Cys53, Cys58, and Cys72 each coordinate [4Fe-4S] cluster. Positions 265, 300, 338, 451, 481, and 531 each coordinate [Ni-4Fe-4S] cluster.

Belongs to the Ni-containing carbon monoxide dehydrogenase family. Homodimer. The cofactor is [4Fe-4S] cluster. Requires [Ni-4Fe-4S] cluster as cofactor.

It is found in the cytoplasm. The protein resides in the cell inner membrane. It carries out the reaction CO + 2 oxidized [2Fe-2S]-[ferredoxin] + H2O = 2 reduced [2Fe-2S]-[ferredoxin] + CO2 + 2 H(+). Functionally, allows growth in a CO-dependent manner in the dark. CODH oxidizes carbon monoxide coupled, via CooF, to the reduction of a hydrogen cation by a hydrogenase (possibly CooH). This Rhodospirillum rubrum protein is Carbon monoxide dehydrogenase (cooS).